The chain runs to 288 residues: Ribosomal RNA small subunit methyltransferase A (288 aa).

Positions 37, 39, 64, 86, 112, and 131 each coordinate S-adenosyl-L-methionine.

The protein belongs to the class I-like SAM-binding methyltransferase superfamily. rRNA adenine N(6)-methyltransferase family. RsmA subfamily.

It is found in the cytoplasm. It catalyses the reaction adenosine(1518)/adenosine(1519) in 16S rRNA + 4 S-adenosyl-L-methionine = N(6)-dimethyladenosine(1518)/N(6)-dimethyladenosine(1519) in 16S rRNA + 4 S-adenosyl-L-homocysteine + 4 H(+). Functionally, specifically dimethylates two adjacent adenosines (A1518 and A1519) in the loop of a conserved hairpin near the 3'-end of 16S rRNA in the 30S particle. May play a critical role in biogenesis of 30S subunits. In Rhodospirillum rubrum (strain ATCC 11170 / ATH 1.1.1 / DSM 467 / LMG 4362 / NCIMB 8255 / S1), this protein is Ribosomal RNA small subunit methyltransferase A.